The primary structure comprises 142 residues: Transcription antitermination protein NusB (142 aa).

It belongs to the NusB family. Monomer or homodimer; in equilibrium, with a preference for the monomer. Dimerization may be employed to package NusB in an inactive form until recruitment into antitermination complexes.

Its function is as follows. Involved in transcription antitermination. Required for transcription of ribosomal RNA (rRNA) genes. Binds specifically to the boxA antiterminator sequence of the ribosomal RNA (rrn) operons. The chain is Transcription antitermination protein NusB from Thermotoga maritima (strain ATCC 43589 / DSM 3109 / JCM 10099 / NBRC 100826 / MSB8).